A 399-amino-acid chain; its full sequence is Acetate kinase (399 aa).

Mg(2+) is bound at residue asparagine 10. Position 17 (lysine 17) interacts with ATP. Arginine 91 is a binding site for substrate. Aspartate 148 functions as the Proton donor/acceptor in the catalytic mechanism. ATP-binding positions include 208–212 (HLGNG), 283–285 (DCR), and 331–335 (GIGEN). Glutamate 385 contributes to the Mg(2+) binding site.

The protein belongs to the acetokinase family. As to quaternary structure, homodimer. Mg(2+) is required as a cofactor. The cofactor is Mn(2+).

The protein localises to the cytoplasm. It catalyses the reaction acetate + ATP = acetyl phosphate + ADP. Its pathway is metabolic intermediate biosynthesis; acetyl-CoA biosynthesis; acetyl-CoA from acetate: step 1/2. In terms of biological role, catalyzes the formation of acetyl phosphate from acetate and ATP. Can also catalyze the reverse reaction. The chain is Acetate kinase from Shewanella sp. (strain MR-4).